The sequence spans 565 residues: Probable protease Gilli_2517 (565 aa).

Functionally, probably a dedicated protease for substrate gasdermin bGSDM; cleaves the bGSDM precursor, releasing the pore-forming moiety, which integrates into the membrane and triggers cell death. Involved in defense against bacteriophages. Expression of bGSDM and this neighboring protease is not toxic in E.coli. The protein is Probable protease Gilli_2517 of Gillisia limnaea (strain DSM 15749 / LMG 21470 / R-8282).